The sequence spans 255 residues: 3-dehydroquinate dehydratase (255 aa).

Residues 47-49 (EWR) and arginine 83 each bind 3-dehydroquinate. Histidine 144 (proton donor/acceptor) is an active-site residue. The Schiff-base intermediate with substrate role is filled by lysine 171. 3 residues coordinate 3-dehydroquinate: arginine 214, serine 233, and glutamine 237.

This sequence belongs to the type-I 3-dehydroquinase family. Homodimer.

It catalyses the reaction 3-dehydroquinate = 3-dehydroshikimate + H2O. It functions in the pathway metabolic intermediate biosynthesis; chorismate biosynthesis; chorismate from D-erythrose 4-phosphate and phosphoenolpyruvate: step 3/7. Its function is as follows. Involved in the third step of the chorismate pathway, which leads to the biosynthesis of aromatic amino acids. Catalyzes the cis-dehydration of 3-dehydroquinate (DHQ) and introduces the first double bond of the aromatic ring to yield 3-dehydroshikimate. The sequence is that of 3-dehydroquinate dehydratase from Alkaliphilus oremlandii (strain OhILAs) (Clostridium oremlandii (strain OhILAs)).